Here is a 431-residue protein sequence, read N- to C-terminus: Enolase (431 aa).

Gln163 lines the (2R)-2-phosphoglycerate pocket. The active-site Proton donor is the Glu205. Mg(2+) is bound by residues Asp242, Glu288, and Asp315. (2R)-2-phosphoglycerate-binding residues include Lys340, Arg369, Ser370, and Lys391. Lys340 (proton acceptor) is an active-site residue.

This sequence belongs to the enolase family. Mg(2+) is required as a cofactor.

The protein localises to the cytoplasm. The protein resides in the secreted. Its subcellular location is the cell surface. The enzyme catalyses (2R)-2-phosphoglycerate = phosphoenolpyruvate + H2O. The protein operates within carbohydrate degradation; glycolysis; pyruvate from D-glyceraldehyde 3-phosphate: step 4/5. Catalyzes the reversible conversion of 2-phosphoglycerate (2-PG) into phosphoenolpyruvate (PEP). It is essential for the degradation of carbohydrates via glycolysis. This chain is Enolase, found in Bacillus anthracis (strain A0248).